The primary structure comprises 489 residues: 5'-AMP-activated protein kinase subunit gamma-3 (489 aa).

Positions 1–113 (MEPGLEHALR…PAGVGTPPTG (113 aa)) are disordered. A compositionally biased stretch (low complexity) spans 34 to 46 (SSSWPSPAVTSSS). The span at 50 to 62 (RGKRRAKALRWTR) shows a compositional bias: basic residues. CBS domains lie at 197-258 (MATS…RSPL), 280-340 (CFKP…LLPR), and 355-415 (TFRD…HLDM). ADP-binding positions include Arg-225, 240-245 (MLTITD), Val-285, 306-307 (HR), and Lys-325. AMP is bound by residues Arg-225, 240–245 (MLTITD), Val-285, His-306, 306–307 (HR), Lys-325, Thr-355, Ala-360, 381–382 (SA), 397–400 (SRFD), Arg-424, Leu-432, His-453, 453–454 (HR), and 469–472 (SLSD). ATP is bound by residues Arg-225, 240–245 (MLTITD), Val-285, 306–307 (HR), Arg-307, and Lys-325. The AMPK pseudosubstrate signature appears at 293–314 (LFEAVYTLIKNRIHRLPVLDPV). ADP is bound by residues 397 to 400 (SRFD), Arg-424, Leu-432, and 453 to 454 (HR). Residues 397–400 (SRFD), Arg-424, Leu-432, and 453–454 (HR) each bind ATP. The 60-residue stretch at 427-486 (CLEGVLSCQPHESLGEVIDRIAREQVHRLVLVDETQHLLGVVSLSDILQALVLSPAGIDA) folds into the CBS 4 domain.

This sequence belongs to the 5'-AMP-activated protein kinase gamma subunit family. AMPK is a heterotrimer of an alpha catalytic subunit (PRKAA1 or PRKAA2), a beta (PRKAB1 or PRKAB2) and a gamma non-catalytic subunits (PRKAG1, PRKAG2 or PRKAG3). Interacts with FNIP1 and FNIP2. In terms of processing, phosphorylated by ULK1; leading to negatively regulate AMPK activity and suggesting the existence of a regulatory feedback loop between ULK1 and AMPK. Glycosylated; O-GlcNAcylated by OGT, promoting the AMP-activated protein kinase (AMPK) activity. As to expression, skeletal muscle, with weak expression in heart and pancreas.

Its function is as follows. AMP/ATP-binding subunit of AMP-activated protein kinase (AMPK), an energy sensor protein kinase that plays a key role in regulating cellular energy metabolism. In response to reduction of intracellular ATP levels, AMPK activates energy-producing pathways and inhibits energy-consuming processes: inhibits protein, carbohydrate and lipid biosynthesis, as well as cell growth and proliferation. AMPK acts via direct phosphorylation of metabolic enzymes, and by longer-term effects via phosphorylation of transcription regulators. AMPK also acts as a regulator of cellular polarity by remodeling the actin cytoskeleton; probably by indirectly activating myosin. The AMPK gamma3 subunit is a non-catalytic subunit with a regulatory role in muscle energy metabolism. It mediates binding to AMP, ADP and ATP, leading to AMPK activation or inhibition: AMP-binding results in allosteric activation of alpha catalytic subunit (PRKAA1 or PRKAA2) both by inducing phosphorylation and preventing dephosphorylation of catalytic subunits. ADP also stimulates phosphorylation, without stimulating already phosphorylated catalytic subunit. ATP promotes dephosphorylation of catalytic subunit, rendering the AMPK enzyme inactive. This is 5'-AMP-activated protein kinase subunit gamma-3 (PRKAG3) from Homo sapiens (Human).